A 408-amino-acid polypeptide reads, in one-letter code: Peptidase T (408 aa).

Zn(2+) is bound at residue H78. D80 is an active-site residue. D140 contacts Zn(2+). Residue E174 is the Proton acceptor of the active site. Residues E175, D197, and H379 each coordinate Zn(2+).

The protein belongs to the peptidase M20B family. Zn(2+) serves as cofactor.

The protein localises to the cytoplasm. It carries out the reaction Release of the N-terminal residue from a tripeptide.. Functionally, cleaves the N-terminal amino acid of tripeptides. In Staphylococcus aureus (strain MRSA252), this protein is Peptidase T.